We begin with the raw amino-acid sequence, 112 residues long: UPF0342 protein SPH_1504 (112 aa).

It belongs to the UPF0342 family.

The sequence is that of UPF0342 protein SPH_1504 from Streptococcus pneumoniae (strain Hungary19A-6).